Consider the following 119-residue polypeptide: MNLAAYFPVLLFLVVGTGLGVALVSIGKILGPNKPDTEKNAPYECGFEAFEDARMKFDVRYYLVAILFIIFDLETAFLFPWGVALRDIGWPGFLAMMIFLLEFLLGFAYIWKKGGLDWE.

Transmembrane regions (helical) follow at residues 7–27 (FPVL…VSIG), 63–83 (LVAI…PWGV), and 88–108 (IGWP…LGFA).

This sequence belongs to the complex I subunit 3 family. In terms of assembly, NDH-1 is composed of 14 different subunits. Subunits NuoA, H, J, K, L, M, N constitute the membrane sector of the complex.

The protein localises to the cell inner membrane. It carries out the reaction a quinone + NADH + 5 H(+)(in) = a quinol + NAD(+) + 4 H(+)(out). NDH-1 shuttles electrons from NADH, via FMN and iron-sulfur (Fe-S) centers, to quinones in the respiratory chain. The immediate electron acceptor for the enzyme in this species is believed to be ubiquinone. Couples the redox reaction to proton translocation (for every two electrons transferred, four hydrogen ions are translocated across the cytoplasmic membrane), and thus conserves the redox energy in a proton gradient. The chain is NADH-quinone oxidoreductase subunit A from Paraburkholderia phytofirmans (strain DSM 17436 / LMG 22146 / PsJN) (Burkholderia phytofirmans).